Here is a 394-residue protein sequence, read N- to C-terminus: NADH dehydrogenase [ubiquinone] iron-sulfur protein 2 (394 aa).

The protein belongs to the complex I 49 kDa subunit family. As to quaternary structure, complex I is composed of at least 49 different subunits. This is a component of the iron-sulfur (IP) fragment of the enzyme.

The protein resides in the mitochondrion. The enzyme catalyses a ubiquinone + NADH + 5 H(+)(in) = a ubiquinol + NAD(+) + 4 H(+)(out). Its function is as follows. Core subunit of the mitochondrial membrane respiratory chain NADH dehydrogenase (Complex I) that is believed to belong to the minimal assembly required for catalysis. Complex I functions in the transfer of electrons from NADH to the respiratory chain. The immediate electron acceptor for the enzyme is believed to be ubiquinone. Component of the iron-sulfur (IP) fragment of the enzyme. This chain is NADH dehydrogenase [ubiquinone] iron-sulfur protein 2 (NAD7), found in Arabidopsis thaliana (Mouse-ear cress).